Here is a 486-residue protein sequence, read N- to C-terminus: BTB/POZ domain and ankyrin repeat-containing protein NBCL (486 aa).

Residues 25–115 (SDVTFSVEGR…LYSGQVSIVP (91 aa)) form the BTB domain. Residues 121–135 (RPNCGERGCWHTHCS) form a C2HC NPR-type zinc finger. Zn(2+) is bound by residues C124, C129, H131, and C134. ANK repeat units follow at residues 257 to 286 (QKIRRMRRALDSSDVELVKLMVMGEGLNLD), 287 to 316 (EALALHYAVENCSREVVKALLELGAADVNY), 321 to 350 (AGKTPLHIAAEMVSPDMVAVLLDHHADPNV), and 354 to 388 (DNVTPLDILRTLTSDFLFKGAIPGLTHIEPNKLRL). 2 disordered regions span residues 403 to 441 (EEGNANNNPPSSTTTTLPMYHHPMNDDHNSSSSSGNNHN) and 464 to 486 (QMSDDHGGRHGDPAMYHHSHHDY). Low complexity-rich tracts occupy residues 406–418 (NANNNPPSSTTTT) and 432–441 (SSSSSGNNHN). Over residues 466–475 (SDDHGGRHGD) the composition is skewed to basic and acidic residues.

The protein belongs to the plant 'ANKYRIN-BTB/POZ' family. 'NOOT-BOP-COCH-like' (NBCL) subfamily. As to quaternary structure, homodimer.

The protein resides in the nucleus. It is found in the cytoplasm. Its subcellular location is the cell membrane. Its pathway is protein modification; protein ubiquitination. May act as a substrate-specific adapter of an E3 ubiquitin-protein ligase complex (CUL3-RBX1-BTB) which mediates the ubiquitination and subsequent proteasomal degradation of target proteins. Transcriptional co-regulator involved in the promotion of leaf and floral meristem fate and determinacy. Necessary for the development of stipules at the base of petioles. Required for the abscission of senescent organs, probably by regulating the cell wall disorganization in abscission zones (AZs, e.g. pulvini at the base of leaves). Promotes slightly root-cap border cells separation from the root tip. Involved in the coordination of the symbiotic nodule developmental program; promotes the formation of root nodules by interacting directly with APP1 to modulate the expression of the nuclear transcription factor Y subunit (NF-YA1), a key nodulin. Necessary for the robust maintenance of nodule identity throughout the nodule developmental program. The protein is BTB/POZ domain and ankyrin repeat-containing protein NBCL of Lupinus angustifolius (Narrow-leaved blue lupine).